The chain runs to 525 residues: Cytochrome P450 4V2 (525 aa).

The chain crosses the membrane as a helical span at residues 13–33 (LLLWGAASALSLAGASLVLSL). Glu329 and Cys467 together coordinate heme.

The protein belongs to the cytochrome P450 family. Requires heme as cofactor. In terms of tissue distribution, broadly expressed. Detected in heart, brain, placenta, lung, liver, skeletal muscle, kidney, pancreas, retina, retinal pigment epithelium (RPE) and lymphocytes.

The protein resides in the endoplasmic reticulum membrane. It catalyses the reaction dodecanoate + reduced [NADPH--hemoprotein reductase] + O2 = 12-hydroxydodecanoate + oxidized [NADPH--hemoprotein reductase] + H2O + H(+). The enzyme catalyses tetradecanoate + reduced [NADPH--hemoprotein reductase] + O2 = 14-hydroxytetradecanoate + oxidized [NADPH--hemoprotein reductase] + H2O + H(+). The catalysed reaction is hexadecanoate + reduced [NADPH--hemoprotein reductase] + O2 = 16-hydroxyhexadecanoate + oxidized [NADPH--hemoprotein reductase] + H2O + H(+). It carries out the reaction (5Z,8Z,11Z,14Z,17Z)-eicosapentaenoate + reduced [NADPH--hemoprotein reductase] + O2 = 20-hydroxy-(5Z,8Z,11Z,14Z,17Z)-eicosapentaenoate + oxidized [NADPH--hemoprotein reductase] + H2O + H(+). It catalyses the reaction (4Z,7Z,10Z,13Z,16Z,19Z)-docosahexaenoate + reduced [NADPH--hemoprotein reductase] + O2 = 22-hydroxy-(4Z,7Z,10Z,13Z,16Z,19Z)-docosahexaenoate + oxidized [NADPH--hemoprotein reductase] + H2O + H(+). Its pathway is lipid metabolism; fatty acid metabolism. Its activity is regulated as follows. Inhibited by N-hydroxy-N'-(4-n-butyl-2-methylphenyl formamidine)(HET0016) with an IC(50) of 38 nM. Functionally, a cytochrome P450 monooxygenase involved in fatty acid metabolism in the eye. Catalyzes the omega-hydroxylation of polyunsaturated fatty acids (PUFAs) docosahexaenoate (DHA) and its precursor eicosapentaenoate (EPA), and may contribute to the homeostasis of these retinal PUFAs. Omega hydroxylates saturated fatty acids such as laurate, myristate and palmitate, the catalytic efficiency decreasing in the following order: myristate &gt; laurate &gt; palmitate (C14&gt;C12&gt;C16). Mechanistically, uses molecular oxygen inserting one oxygen atom into a substrate, and reducing the second into a water molecule, with two electrons provided by NADPH via cytochrome P450 reductase (CPR; NADPH-ferrihemoprotein reductase). In Homo sapiens (Human), this protein is Cytochrome P450 4V2 (CYP4V2).